The following is a 271-amino-acid chain: Formamidopyrimidine-DNA glycosylase (271 aa).

Catalysis depends on Pro2, which acts as the Schiff-base intermediate with DNA. Catalysis depends on Glu3, which acts as the Proton donor. The active-site Proton donor; for beta-elimination activity is the Lys57. The DNA site is built by His90, Arg109, and Lys151. Residues 236–270 form an FPG-type zinc finger; the sequence is HVYGRGGETCTQCGHLLSEIKLGQRATVFCSLCQK. Catalysis depends on Arg260, which acts as the Proton donor; for delta-elimination activity.

The protein belongs to the FPG family. As to quaternary structure, monomer. Zn(2+) is required as a cofactor.

The enzyme catalyses Hydrolysis of DNA containing ring-opened 7-methylguanine residues, releasing 2,6-diamino-4-hydroxy-5-(N-methyl)formamidopyrimidine.. It carries out the reaction 2'-deoxyribonucleotide-(2'-deoxyribose 5'-phosphate)-2'-deoxyribonucleotide-DNA = a 3'-end 2'-deoxyribonucleotide-(2,3-dehydro-2,3-deoxyribose 5'-phosphate)-DNA + a 5'-end 5'-phospho-2'-deoxyribonucleoside-DNA + H(+). Its function is as follows. Involved in base excision repair of DNA damaged by oxidation or by mutagenic agents. Acts as a DNA glycosylase that recognizes and removes damaged bases. Has a preference for oxidized purines, such as 7,8-dihydro-8-oxoguanine (8-oxoG). Has AP (apurinic/apyrimidinic) lyase activity and introduces nicks in the DNA strand. Cleaves the DNA backbone by beta-delta elimination to generate a single-strand break at the site of the removed base with both 3'- and 5'-phosphates. This chain is Formamidopyrimidine-DNA glycosylase, found in Shewanella halifaxensis (strain HAW-EB4).